Here is a 499-residue protein sequence, read N- to C-terminus: Lysine--tRNA ligase (499 aa).

Mg(2+) is bound by residues glutamate 408 and glutamate 415.

Belongs to the class-II aminoacyl-tRNA synthetase family. Homodimer. The cofactor is Mg(2+).

Its subcellular location is the cytoplasm. The enzyme catalyses tRNA(Lys) + L-lysine + ATP = L-lysyl-tRNA(Lys) + AMP + diphosphate. The sequence is that of Lysine--tRNA ligase from Bacillus thuringiensis (strain Al Hakam).